Here is a 120-residue protein sequence, read N- to C-terminus: MEGLRRGLSRWKRYHIKVHLADEALLLPLTVRPRDTLSDLRAQLVGQGVSSWKRAFYYNARRLDDHQTVRDARLQDGSVLLLVSDPSEAQRLTPAIPALWEAEASRSLESRSSRPAWPTW.

Residues 14–83 enclose the Ubiquitin-like domain; the sequence is YHIKVHLADE…LQDGSVLLLV (70 aa).

Detected in stratum corneum (at protein level).

This chain is Ubiquitin domain-containing protein TINCR, found in Homo sapiens (Human).